The following is a 1759-amino-acid chain: Zinc finger protein castor homolog 1 (1759 aa).

Disordered stretches follow at residues 1–26 (MDLGTAEGTRCTDPPAGKPAMAPKRK) and 46–175 (KRAD…SSLR). 2 stretches are compositionally biased toward basic and acidic residues: residues 77–88 (PRSEEDKRRAVI) and 137–160 (EEPSKDGGALEEKDSDGAASKEDS). A compositionally biased stretch (polar residues) spans 161–171 (GPSTRQASGEA). K288 participates in a covalent cross-link: Glycyl lysine isopeptide (Lys-Gly) (interchain with G-Cter in SUMO2). Residues 374–420 (SKYDVRGIQKPGPAKVPPTPSLAPAPLASVPSAPSAPGPGPEPPASL) are disordered. The span at 387–396 (AKVPPTPSLA) shows a compositional bias: pro residues. Residues 397–406 (PAPLASVPSA) show a composition bias toward low complexity. Over residues 407–417 (PSAPGPGPEPP) the composition is skewed to pro residues. 3 C2H2-type zinc fingers span residues 551–575 (YHCMQVGCNKVYTSTSDVMTHENFH), 610–634 (FHCRRPGCTFTFKNKCDIEKHKSYH), and 668–692 (FHCIRAGCGFTFTSTSQMTSHKRKH). 4 disordered regions span residues 686-723 (TSHKRKHERRHIRSSGALGLPPSLLGAKDTEHEESSND), 736-776 (SSLS…SGLL), 824-843 (VSSGSAASATPDTPTLVASG), and 889-949 (ATFD…AVPA). Basic residues predominate over residues 687-698 (SHKRKHERRHIR). A compositionally biased stretch (low complexity) spans 699–712 (SSGALGLPPSLLGA). Phosphoserine is present on residues S720 and S721. The segment covering 736-764 (SSLSASPTSQQSSASLAAATAATEAGPSA) has biased composition (low complexity). Over residues 925–939 (ASQDRSLDLTVKEPS) the composition is skewed to basic and acidic residues. K975 is covalently cross-linked (Glycyl lysine isopeptide (Lys-Gly) (interchain with G-Cter in SUMO2)). S981 is subject to Phosphoserine. The segment at 1031 to 1055 (FHCVVEECGALFSTLDGAIKHANFH) adopts a C2H2-type 4 zinc-finger fold. A disordered region spans residues 1067–1111 (TEAAFPASAAETKPPMAPSSPPVPPVTTATVSSLEGPAPSPASVP). Residues 1081 to 1091 (PMAPSSPPVPP) show a composition bias toward pro residues. The segment at 1300–1324 (FHCIREGCQFSFLLKHQMTSHARKH) adopts a C2H2-type 5 zinc-finger fold. The disordered stretch occupies residues 1367–1392 (ESSTMDRSCSSTPVGNESTAAGNTIS). 3 consecutive C2H2-type zinc fingers follow at residues 1457–1481 (YHCTRENCGYKFCGRTHMYKHAQHH), 1515–1537 (FHCLRCRFRCTDSTKVTAHRKHH), and 1571–1595 (FHCTFPGCRHTVVGMSQMDSHKRKH). Disordered stretches follow at residues 1589 to 1620 (DSHKRKHEKQERGEPAAEGPAPGPPISLDGSL) and 1643 to 1736 (LGDA…AGAR). Residues 1655–1673 (AAPGPREGAAAAAAAAGES) show a composition bias toward low complexity. Residues 1674-1723 (SQEDEEEELELPEEEAEDDEDEDDDEDDDDEDDDEDDDDEDLRTDSEESL) show a composition bias toward acidic residues. Residues 1724-1736 (PEAAAEAAGAGAR) are compositionally biased toward low complexity.

Expressed in heart, lung, skeletal muscle, pancreas, testis, small intestine, and stomach, but it is not detectable in the adult brain.

Its subcellular location is the nucleus. Functionally, transcriptional activator. Involved in vascular assembly and morphogenesis through direct transcriptional regulation of EGFL7. The polypeptide is Zinc finger protein castor homolog 1 (CASZ1) (Homo sapiens (Human)).